We begin with the raw amino-acid sequence, 276 residues long: Formamidopyrimidine-DNA glycosylase (276 aa).

P2 serves as the catalytic Schiff-base intermediate with DNA. Catalysis depends on E3, which acts as the Proton donor. Catalysis depends on K60, which acts as the Proton donor; for beta-elimination activity. Residues H93 and R112 each contribute to the DNA site. The FPG-type zinc finger occupies 240–274 (NVYGKKGEPCVTCGTILEKTVVGGRGTHYCPICQP). The Proton donor; for delta-elimination activity role is filled by R264.

The protein belongs to the FPG family. Monomer. It depends on Zn(2+) as a cofactor.

The enzyme catalyses Hydrolysis of DNA containing ring-opened 7-methylguanine residues, releasing 2,6-diamino-4-hydroxy-5-(N-methyl)formamidopyrimidine.. It carries out the reaction 2'-deoxyribonucleotide-(2'-deoxyribose 5'-phosphate)-2'-deoxyribonucleotide-DNA = a 3'-end 2'-deoxyribonucleotide-(2,3-dehydro-2,3-deoxyribose 5'-phosphate)-DNA + a 5'-end 5'-phospho-2'-deoxyribonucleoside-DNA + H(+). Involved in base excision repair of DNA damaged by oxidation or by mutagenic agents. Acts as a DNA glycosylase that recognizes and removes damaged bases. Has a preference for oxidized purines, such as 7,8-dihydro-8-oxoguanine (8-oxoG). Has AP (apurinic/apyrimidinic) lyase activity and introduces nicks in the DNA strand. Cleaves the DNA backbone by beta-delta elimination to generate a single-strand break at the site of the removed base with both 3'- and 5'-phosphates. This Bacillus anthracis protein is Formamidopyrimidine-DNA glycosylase.